A 229-amino-acid chain; its full sequence is Ribonuclease 3 (229 aa).

An RNase III domain is found at 5 to 127 (LDRLERKLGY…LIGAIYQDAD (123 aa)). Glu40 lines the Mg(2+) pocket. The active site involves Asp44. The Mg(2+) site is built by Asp113 and Glu116. Glu116 is an active-site residue. The DRBM domain occupies 154–224 (DPKTRLQEFL…AAAALIALGV (71 aa)).

This sequence belongs to the ribonuclease III family. In terms of assembly, homodimer. Mg(2+) is required as a cofactor.

The protein localises to the cytoplasm. The enzyme catalyses Endonucleolytic cleavage to 5'-phosphomonoester.. Functionally, digests double-stranded RNA. Involved in the processing of primary rRNA transcript to yield the immediate precursors to the large and small rRNAs (23S and 16S). Processes some mRNAs, and tRNAs when they are encoded in the rRNA operon. Processes pre-crRNA and tracrRNA of type II CRISPR loci if present in the organism. The protein is Ribonuclease 3 of Pseudomonas entomophila (strain L48).